Consider the following 525-residue polypeptide: ATP synthase subunit alpha (525 aa).

ATP is bound at residue Gly-169–Thr-176.

The protein belongs to the ATPase alpha/beta chains family. F-type ATPases have 2 components, CF(1) - the catalytic core - and CF(0) - the membrane proton channel. CF(1) has five subunits: alpha(3), beta(3), gamma(1), delta(1), epsilon(1). CF(0) has three main subunits: a(1), b(2) and c(9-12). The alpha and beta chains form an alternating ring which encloses part of the gamma chain. CF(1) is attached to CF(0) by a central stalk formed by the gamma and epsilon chains, while a peripheral stalk is formed by the delta and b chains.

It localises to the cell membrane. It catalyses the reaction ATP + H2O + 4 H(+)(in) = ADP + phosphate + 5 H(+)(out). In terms of biological role, produces ATP from ADP in the presence of a proton gradient across the membrane. The alpha chain is a regulatory subunit. The polypeptide is ATP synthase subunit alpha (Mycoplasma mycoides subsp. mycoides SC (strain CCUG 32753 / NCTC 10114 / PG1)).